The following is a 528-amino-acid chain: GMP synthase [glutamine-hydrolyzing] (528 aa).

The region spanning 13–204 (AIVILDFGSQ…VYDICSCEPD (192 aa)) is the Glutamine amidotransferase type-1 domain. Catalysis depends on cysteine 90, which acts as the Nucleophile. Active-site residues include histidine 178 and glutamate 180. Positions 205 to 403 (WTTNLFIDEA…LGLPDEIVRR (199 aa)) constitute a GMPS ATP-PPase domain. 232-238 (SGGVDSS) is an ATP binding site.

As to quaternary structure, homodimer.

The enzyme catalyses XMP + L-glutamine + ATP + H2O = GMP + L-glutamate + AMP + diphosphate + 2 H(+). Its pathway is purine metabolism; GMP biosynthesis; GMP from XMP (L-Gln route): step 1/1. Its function is as follows. Catalyzes the synthesis of GMP from XMP. In Prochlorococcus marinus (strain NATL2A), this protein is GMP synthase [glutamine-hydrolyzing].